A 297-amino-acid polypeptide reads, in one-letter code: Retroviral cyclin (297 aa).

The 93-residue stretch at 21–113 (PVYWKELLNW…KPSLLLTETM (93 aa)) folds into the Cyclin N-terminal domain. Residues 21–113 (PVYWKELLNW…KPSLLLTETM (93 aa)) form a transcription activation domain region. A coiled-coil region spans residues 222 to 270 (QINLDFAEAEQREAAERRALLEREREQQLQEARERLDDVMAVLEAEVAI).

It belongs to the cyclin family. Interacts (via transcription activation domain) with host TAF9 in vitro. Interacts with host CDK3 and CDK8.

The protein localises to the host nucleus. In terms of biological role, transforming protein which induces the development of dermal sarcomas. Induces positive and negative regulation of transcription from host and viral promoters by interacting with various cellular factors involved in protein transcription regulation. The polypeptide is Retroviral cyclin (orfA) (Sander vitreus (Walleye)).